Here is a 70-residue protein sequence, read N- to C-terminus: Large ribosomal subunit protein bL31 (70 aa).

The protein belongs to the bacterial ribosomal protein bL31 family. Type A subfamily. In terms of assembly, part of the 50S ribosomal subunit.

Functionally, binds the 23S rRNA. This chain is Large ribosomal subunit protein bL31, found in Chlorobium chlorochromatii (strain CaD3).